A 974-amino-acid polypeptide reads, in one-letter code: Membrane-associated phosphatidylinositol transfer protein 3 (974 aa).

Serine 30, serine 31, serine 109, serine 295, serine 298, serine 321, serine 343, and serine 495 each carry phosphoserine. Residues 310–347 are disordered; the sequence is CSLASSKRLSKSNVDVSSGVEDEDPKRPLPRKQSDSST. The span at 312–325 shows a compositional bias: polar residues; that stretch reads LASSKRLSKSNVDV. The 205-residue stretch at 390–594 folds into the DDHD domain; sequence FDFDVSDFFL…VAFILRQVMR (205 aa). The disordered stretch occupies residues 497-535; the sequence is PLLDAPASPPQAPRFQRTERRLSKGSSHSDSSESSDSLA. The span at 520 to 533 shows a compositional bias: low complexity; it reads KGSSHSDSSESSDS. Residues serine 612, serine 907, serine 928, and serine 946 each carry the phosphoserine modification. Residues 927–974 form a disordered region; that stretch reads MSVQQPDPPAANPKPERAQSQPESDKDHERPLPALSWARGPPKFESVP.

Belongs to the PtdIns transfer protein family. PI transfer class IIA subfamily. Interacts with PTK2B via its C-terminus.

It is found in the endomembrane system. Catalyzes the transfer of phosphatidylinositol and phosphatidylcholine between membranes (in vitro). Binds calcium ions. The polypeptide is Membrane-associated phosphatidylinositol transfer protein 3 (Pitpnm3) (Mus musculus (Mouse)).